A 98-amino-acid chain; its full sequence is Large ribosomal subunit protein bL28 (98 aa).

This sequence belongs to the bacterial ribosomal protein bL28 family.

This Phenylobacterium zucineum (strain HLK1) protein is Large ribosomal subunit protein bL28.